Reading from the N-terminus, the 747-residue chain is MASRVTDAIVWYQKKIGAYDQQIWEKSVEQREIKGLRNKPKKTAHVKPDLIDVDLVRGSAFAKAKPESPWTSLTRKGIVRVVFFPFFSRWWLQVTSRVIFSWLLVLYLLQVAAIVLFCSAPSPHSIPLTEVIGPIWLMLLLGTVHCQIVSTRTPKPPLGTGGKRRRKLRKAAHLEVHREGDGSSTTDNTQEGAVQSYGAGAPYSVGTVFRDLWLAAFFLSGSKKAKNSIDKSTETDNGYVSLDGKRTVKSSEDGAQYHELQCETVGPEDAAWATRTPRSVPAKDTQRKITNVSDEVSSEEGPETGYPLRGHVDRTSESGLRNRKPHHYKKHYANEDAPKSGTSCSSRCSSSRQDSESTRPESETEGVLWEDLLHCAECRSSCTSETDVGNPQINPCGKKEYRDDPFHQSHLPWLHSSHPGLEKISAIVWEGNDCKKADMSVLEISGMIMNRVNNHVPGIGYQVFGNAISLILGLTPFVFRLSQATDLEQLTAHSASELYVIAFGSNEDVMVLSMVLISFVVRVSLVWIFFFLLCVAERTYKQRLLFAKLFGHLTSARRARKSEVPHFRLKKVQNIKMWLSLRSYLKRRGPQRSVDVIVSSAFLLTISVVFICCAQLLHVHEIFLDCHCNWELVIWCISLTLFLLRFVTLGSETSKKYSNTSILLTEQINLYLKMEKKPNKKEELTLVNNVLKLATKLLKELDSPFRLYGLTMNPLLYNITQVVILSAVSGVISDLLGFNLKLWKIKS.

One can recognise a PHTF domain in the interval 6 to 153 (TDAIVWYQKK…VHCQIVSTRT (148 aa)). Helical transmembrane passes span 98 to 118 (VIFS…VLFC) and 126 to 146 (IPLT…TVHC). Disordered regions lie at residues 170 to 192 (KAAH…TQEG) and 268 to 365 (EDAA…SETE). Residues 172–181 (AHLEVHREGD) show a composition bias toward basic and acidic residues. Positions 182–192 (GSSTTDNTQEG) are enriched in polar residues. Asn-291 carries an N-linked (GlcNAc...) asparagine glycan. Residues 321–331 (RNRKPHHYKKH) show a composition bias toward basic residues. Positions 340-352 (SGTSCSSRCSSSR) are enriched in low complexity. The segment covering 353–362 (QDSESTRPES) has biased composition (basic and acidic residues). The next 4 helical transmembrane spans lie at 459–479 (IGYQ…PFVF), 515–535 (VLIS…LLCV), 596–616 (VIVS…CAQL), and 630–650 (WELV…VTLG). N-linked (GlcNAc...) asparagine glycosylation is found at Asn-659 and Asn-718. A helical transmembrane segment spans residues 722-742 (VVILSAVSGVISDLLGFNLKL).

It localises to the membrane. In Mus musculus (Mouse), this protein is Protein PHTF2 (Phtf2).